The sequence spans 84 residues: RNA-binding protein Hfq (84 aa).

The 60-residue stretch at Glu-10–Val-69 folds into the Sm domain.

Belongs to the Hfq family. In terms of assembly, homohexamer.

RNA chaperone that binds small regulatory RNA (sRNAs) and mRNAs to facilitate mRNA translational regulation in response to envelope stress, environmental stress and changes in metabolite concentrations. Also binds with high specificity to tRNAs. The chain is RNA-binding protein Hfq from Verminephrobacter eiseniae (strain EF01-2).